The following is an 879-amino-acid chain: Pentatricopeptide repeat-containing protein At1g71210, mitochondrial (879 aa).

Residues M1–F44 constitute a mitochondrion transit peptide. PPR repeat units follow at residues S181–L215, D216–R246, C250–N280, C285–N319, M320–L355, E356–P390, N391–P425, T426–L460, G461–P495, K496–T530, S531–P565, T566–S597, K602–P636, T637–Q667, K671–P705, and S706–I740.

Belongs to the PPR family. P subfamily.

Its subcellular location is the mitochondrion. In Arabidopsis thaliana (Mouse-ear cress), this protein is Pentatricopeptide repeat-containing protein At1g71210, mitochondrial.